Consider the following 334-residue polypeptide: Dihydroorotate dehydrogenase (quinone) (334 aa).

FMN-binding positions include 59–63 and Thr83; that span reads AGLDK. Residue Lys63 coordinates substrate. 108 to 112 lines the substrate pocket; the sequence is NRMGF. Asn136 and Asn169 together coordinate FMN. Residue Asn169 participates in substrate binding. Ser172 acts as the Nucleophile in catalysis. Asn174 serves as a coordination point for substrate. The FMN site is built by Lys214 and Thr242. 243–244 is a binding site for substrate; the sequence is NT. Residues Gly265, Gly294, and 315 to 316 contribute to the FMN site; that span reads YS.

Belongs to the dihydroorotate dehydrogenase family. Type 2 subfamily. In terms of assembly, monomer. FMN serves as cofactor.

It is found in the cell membrane. The catalysed reaction is (S)-dihydroorotate + a quinone = orotate + a quinol. The protein operates within pyrimidine metabolism; UMP biosynthesis via de novo pathway; orotate from (S)-dihydroorotate (quinone route): step 1/1. Functionally, catalyzes the conversion of dihydroorotate to orotate with quinone as electron acceptor. In Acinetobacter baylyi (strain ATCC 33305 / BD413 / ADP1), this protein is Dihydroorotate dehydrogenase (quinone).